The chain runs to 274 residues: Acyl-[acyl-carrier-protein]--UDP-N-acetylglucosamine O-acyltransferase (274 aa).

This sequence belongs to the transferase hexapeptide repeat family. LpxA subfamily. As to quaternary structure, homotrimer.

It is found in the cytoplasm. It carries out the reaction a (3R)-hydroxyacyl-[ACP] + UDP-N-acetyl-alpha-D-glucosamine = a UDP-3-O-[(3R)-3-hydroxyacyl]-N-acetyl-alpha-D-glucosamine + holo-[ACP]. It functions in the pathway glycolipid biosynthesis; lipid IV(A) biosynthesis; lipid IV(A) from (3R)-3-hydroxytetradecanoyl-[acyl-carrier-protein] and UDP-N-acetyl-alpha-D-glucosamine: step 1/6. Functionally, involved in the biosynthesis of lipid A, a phosphorylated glycolipid that anchors the lipopolysaccharide to the outer membrane of the cell. This is Acyl-[acyl-carrier-protein]--UDP-N-acetylglucosamine O-acyltransferase from Bartonella henselae (strain ATCC 49882 / DSM 28221 / CCUG 30454 / Houston 1) (Rochalimaea henselae).